The chain runs to 540 residues: Chaperonin GroEL (540 aa).

ATP-binding positions include 30–33 (TLGP), 87–91 (DGTTT), Gly414, 479–481 (NAL), and Asp495.

Belongs to the chaperonin (HSP60) family. As to quaternary structure, forms a cylinder of 14 subunits composed of two heptameric rings stacked back-to-back. Interacts with the co-chaperonin GroES.

The protein localises to the cytoplasm. The enzyme catalyses ATP + H2O + a folded polypeptide = ADP + phosphate + an unfolded polypeptide.. Together with its co-chaperonin GroES, plays an essential role in assisting protein folding. The GroEL-GroES system forms a nano-cage that allows encapsulation of the non-native substrate proteins and provides a physical environment optimized to promote and accelerate protein folding. The chain is Chaperonin GroEL from Rubrobacter xylanophilus (strain DSM 9941 / JCM 11954 / NBRC 16129 / PRD-1).